The following is a 275-amino-acid chain: Large ribosomal subunit protein uL2 (275 aa).

The segment at 223 to 275 is disordered; it reads GVVMNPVDHPHGGGEGRGKGHHPQSPWGVPAKGYKTRRGKRASDKFIVRRRNG. Positions 230–240 are enriched in basic and acidic residues; it reads DHPHGGGEGRG.

The protein belongs to the universal ribosomal protein uL2 family. As to quaternary structure, part of the 50S ribosomal subunit. Forms a bridge to the 30S subunit in the 70S ribosome.

In terms of biological role, one of the primary rRNA binding proteins. Required for association of the 30S and 50S subunits to form the 70S ribosome, for tRNA binding and peptide bond formation. It has been suggested to have peptidyltransferase activity; this is somewhat controversial. Makes several contacts with the 16S rRNA in the 70S ribosome. The protein is Large ribosomal subunit protein uL2 of Fervidobacterium nodosum (strain ATCC 35602 / DSM 5306 / Rt17-B1).